A 678-amino-acid polypeptide reads, in one-letter code: DNA ligase (678 aa).

NAD(+) is bound by residues Asp47 to Asp51, Ser96 to Leu97, and Glu122. Lys124 (N6-AMP-lysine intermediate) is an active-site residue. Residues Arg145, Glu182, Lys300, and Lys324 each coordinate NAD(+). Positions 418, 421, 436, and 442 each coordinate Zn(2+). The 77-residue stretch at Ala602–Leu678 folds into the BRCT domain.

The protein belongs to the NAD-dependent DNA ligase family. LigA subfamily. Mg(2+) serves as cofactor. Mn(2+) is required as a cofactor.

It carries out the reaction NAD(+) + (deoxyribonucleotide)n-3'-hydroxyl + 5'-phospho-(deoxyribonucleotide)m = (deoxyribonucleotide)n+m + AMP + beta-nicotinamide D-nucleotide.. Its function is as follows. DNA ligase that catalyzes the formation of phosphodiester linkages between 5'-phosphoryl and 3'-hydroxyl groups in double-stranded DNA using NAD as a coenzyme and as the energy source for the reaction. It is essential for DNA replication and repair of damaged DNA. This Francisella philomiragia subsp. philomiragia (strain ATCC 25017 / CCUG 19701 / FSC 153 / O#319-036) protein is DNA ligase.